The following is a 372-amino-acid chain: Glutamate 5-kinase (372 aa).

An ATP-binding site is contributed by Lys-14. The substrate site is built by Ser-54, Asp-141, and Asn-153. 173–174 (TD) provides a ligand contact to ATP. Residues 280–358 (RGHVVIDAGA…GEIEIVLGYM (79 aa)) form the PUA domain.

This sequence belongs to the glutamate 5-kinase family.

The protein resides in the cytoplasm. It carries out the reaction L-glutamate + ATP = L-glutamyl 5-phosphate + ADP. Its pathway is amino-acid biosynthesis; L-proline biosynthesis; L-glutamate 5-semialdehyde from L-glutamate: step 1/2. Catalyzes the transfer of a phosphate group to glutamate to form L-glutamate 5-phosphate. This Burkholderia orbicola (strain MC0-3) protein is Glutamate 5-kinase.